A 367-amino-acid chain; its full sequence is Mitogen-activated protein kinase 12 (367 aa).

Positions 27 to 311 constitute a Protein kinase domain; that stretch reads YQDLQPVGSG…AAEALTHPYF (285 aa). ATP-binding positions include 33–41 and Lys-56; that span reads VGSGAYGAV. The active-site Proton acceptor is Asp-153. Phosphothreonine is present on Thr-183. The short motif at 183 to 185 is the TXY element; sequence TGY. Tyr-185 carries the post-translational modification Phosphotyrosine.

It belongs to the protein kinase superfamily. CMGC Ser/Thr protein kinase family. MAP kinase subfamily. As to quaternary structure, monomer. Interacts with the PDZ domain of the syntrophin SNTA1. Interacts with SH3BP5, LIN7C, SCRIB and SYNJ2BP. Interacts with PTPN4; this interaction induces the activation of PTPN4 phosphatase activity. Requires Mg(2+) as cofactor. Dually phosphorylated on Thr-183 and Tyr-185 by MAP2K3/MKK3 and MAP2K6/MKK6, which activates the enzyme. Post-translationally, ubiquitinated. Ubiquitination leads to degradation by the proteasome pathway. In terms of tissue distribution, highly expressed in skeletal muscle. Also expressed in the heart, particularly in cardiac myocytes, lung, thymus and testes.

The protein localises to the cytoplasm. Its subcellular location is the nucleus. The protein resides in the mitochondrion. It catalyses the reaction L-seryl-[protein] + ATP = O-phospho-L-seryl-[protein] + ADP + H(+). The catalysed reaction is L-threonyl-[protein] + ATP = O-phospho-L-threonyl-[protein] + ADP + H(+). With respect to regulation, activated by phosphorylation on threonine and tyrosine. MAP2K3/MKK3 and MAP2K6/MKK6 are both essential for the activation of MAPK12 induced by environmental stress, whereas MAP2K6/MKK6 is the major MAPK12 activator in response to TNF-alpha. In terms of biological role, serine/threonine kinase which acts as an essential component of the MAP kinase signal transduction pathway. MAPK12 is one of the four p38 MAPKs which play an important role in the cascades of cellular responses evoked by extracellular stimuli such as pro-inflammatory cytokines or physical stress leading to direct activation of transcription factors such as ELK1 and ATF2. Accordingly, p38 MAPKs phosphorylate a broad range of proteins and it has been estimated that they may have approximately 200 to 300 substrates each. Some of the targets are downstream kinases such as MAPKAPK2, which are activated through phosphorylation and further phosphorylate additional targets. Plays a role in myoblast differentiation and also in the down-regulation of cyclin D1 in response to hypoxia in adrenal cells suggesting MAPK12 may inhibit cell proliferation while promoting differentiation. Phosphorylates DLG1. Following osmotic shock, MAPK12 in the cell nucleus increases its association with nuclear DLG1, thereby causing dissociation of DLG1-SFPQ complexes. This function is independent of its catalytic activity and could affect mRNA processing and/or gene transcription to aid cell adaptation to osmolarity changes in the environment. Regulates UV-induced checkpoint signaling and repair of UV-induced DNA damage and G2 arrest after gamma-radiation exposure. MAPK12 is involved in the regulation of SLC2A1 expression and basal glucose uptake in L6 myotubes; and negatively regulates SLC2A4 expression and contraction-mediated glucose uptake in adult skeletal muscle. C-Jun (JUN) phosphorylation is stimulated by MAPK14 and inhibited by MAPK12, leading to a distinct AP-1 regulation. MAPK12 is required for the normal kinetochore localization of PLK1, prevents chromosomal instability and supports mitotic cell viability. MAPK12-signaling is also positively regulating the expansion of transient amplifying myogenic precursor cells during muscle growth and regeneration. The protein is Mitogen-activated protein kinase 12 (Mapk12) of Mus musculus (Mouse).